The primary structure comprises 224 residues: Urease accessory protein UreF (224 aa).

Belongs to the UreF family. In terms of assembly, ureD, UreF and UreG form a complex that acts as a GTP-hydrolysis-dependent molecular chaperone, activating the urease apoprotein by helping to assemble the nickel containing metallocenter of UreC. The UreE protein probably delivers the nickel.

Its subcellular location is the cytoplasm. Functionally, required for maturation of urease via the functional incorporation of the urease nickel metallocenter. In Escherichia coli O157:H7, this protein is Urease accessory protein UreF.